The sequence spans 248 residues: Ubiquinone/menaquinone biosynthesis C-methyltransferase UbiE (248 aa).

S-adenosyl-L-methionine is bound by residues S68 and D92.

Belongs to the class I-like SAM-binding methyltransferase superfamily. MenG/UbiE family.

It catalyses the reaction a 2-demethylmenaquinol + S-adenosyl-L-methionine = a menaquinol + S-adenosyl-L-homocysteine + H(+). It carries out the reaction a 2-methoxy-6-(all-trans-polyprenyl)benzene-1,4-diol + S-adenosyl-L-methionine = a 5-methoxy-2-methyl-3-(all-trans-polyprenyl)benzene-1,4-diol + S-adenosyl-L-homocysteine + H(+). It functions in the pathway quinol/quinone metabolism; menaquinone biosynthesis; menaquinol from 1,4-dihydroxy-2-naphthoate: step 2/2. The protein operates within cofactor biosynthesis; ubiquinone biosynthesis. In terms of biological role, methyltransferase required for the conversion of demethylmenaquinol (DMKH2) to menaquinol (MKH2) and the conversion of 2-polyprenyl-6-methoxy-1,4-benzoquinol (DDMQH2) to 2-polyprenyl-3-methyl-6-methoxy-1,4-benzoquinol (DMQH2). The protein is Ubiquinone/menaquinone biosynthesis C-methyltransferase UbiE of Rickettsia akari (strain Hartford).